We begin with the raw amino-acid sequence, 237 residues long: 7-cyano-7-deazaguanine synthase (237 aa).

Tyr-9–Leu-19 contributes to the ATP binding site. Zn(2+)-binding residues include Cys-189, Cys-199, Cys-202, and Cys-205.

This sequence belongs to the QueC family. Zn(2+) is required as a cofactor.

It catalyses the reaction 7-carboxy-7-deazaguanine + NH4(+) + ATP = 7-cyano-7-deazaguanine + ADP + phosphate + H2O + H(+). The protein operates within purine metabolism; 7-cyano-7-deazaguanine biosynthesis. Catalyzes the ATP-dependent conversion of 7-carboxy-7-deazaguanine (CDG) to 7-cyano-7-deazaguanine (preQ(0)). The polypeptide is 7-cyano-7-deazaguanine synthase (Geobacter sulfurreducens (strain ATCC 51573 / DSM 12127 / PCA)).